The following is a 383-amino-acid chain: NifS-like protein (383 aa).

Residues 58–59 and 184–186 contribute to the pyridoxal 5'-phosphate site; these read SE and SIN.

Belongs to the class-V pyridoxal-phosphate-dependent aminotransferase family. NifS/IscS subfamily. Pyridoxal 5'-phosphate serves as cofactor.

The protein localises to the virion. In African swine fever virus (strain Badajoz 1971 Vero-adapted) (Ba71V), this protein is NifS-like protein.